The primary structure comprises 239 residues: Ribosomal RNA small subunit methyltransferase G (239 aa).

S-adenosyl-L-methionine-binding positions include Gly78, Phe83, 129-130 (AE), and Arg148.

Belongs to the methyltransferase superfamily. RNA methyltransferase RsmG family.

The protein localises to the cytoplasm. Specifically methylates the N7 position of a guanine in 16S rRNA. This Clostridium botulinum (strain 657 / Type Ba4) protein is Ribosomal RNA small subunit methyltransferase G.